The following is a 196-amino-acid chain: Heat shock protein beta-8 (196 aa).

The interval 1–35 (MADGQMPFSCHYPSRLRRDPFRDSPLPSRLLDDDF) is disordered. Phosphoserine occurs at positions 24 and 57. Position 63 is a phosphothreonine (T63). An asymmetric dimethylarginine mark is found at R71 and R78. Positions 74-185 (TAAARFGVPA…PFGESNFNNE (112 aa)) constitute a sHSP domain. A Phosphoserine modification is found at S87. The interval 176–196 (PFGESNFNNELPQDSQEVTCT) is disordered. A compositionally biased stretch (polar residues) spans 178 to 196 (GESNFNNELPQDSQEVTCT).

Belongs to the small heat shock protein (HSP20) family. As to quaternary structure, monomer. Forms a ternary complex with BAG3 and HSPA1A. Component of the chaperone-assisted selective autophagy (CASA) complex consisting of BAG3, HSPA8/HSC70, HSPB8 and STUB1/CHIP. Interacts with HSPB1. Interacts with DNAJB6. Interacts with BAG3. Phosphorylated.

Its subcellular location is the cytoplasm. It is found in the nucleus. Involved in the chaperone-assisted selective autophagy (CASA), a crucial process for protein quality control, particularly in mechanical strained cells and tissues such as muscle. Displays temperature-dependent chaperone activity. The chain is Heat shock protein beta-8 (HSPB8) from Canis lupus familiaris (Dog).